The primary structure comprises 100 residues: Small ribosomal subunit protein uS14c (100 aa).

It belongs to the universal ribosomal protein uS14 family. Part of the 30S ribosomal subunit.

It localises to the plastid. The protein resides in the chloroplast. Its function is as follows. Binds 16S rRNA, required for the assembly of 30S particles. This is Small ribosomal subunit protein uS14c from Cicer arietinum (Chickpea).